The chain runs to 483 residues: UDP-N-acetylmuramyl-tripeptide synthetase (483 aa).

Serine 43 contacts UDP-N-acetyl-alpha-D-muramoyl-L-alanyl-D-glutamate. 116–122 (GTKGKTT) is a binding site for ATP. UDP-N-acetyl-alpha-D-muramoyl-L-alanyl-D-glutamate-binding positions include 160–161 (TT), serine 187, and arginine 195. At lysine 229 the chain carries N6-carboxylysine.

Belongs to the MurCDEF family. MurE subfamily. In terms of processing, carboxylation is probably crucial for Mg(2+) binding and, consequently, for the gamma-phosphate positioning of ATP.

The protein localises to the cytoplasm. It participates in cell wall biogenesis; peptidoglycan biosynthesis. Functionally, catalyzes the addition of an amino acid to the nucleotide precursor UDP-N-acetylmuramoyl-L-alanyl-D-glutamate (UMAG) in the biosynthesis of bacterial cell-wall peptidoglycan. The polypeptide is UDP-N-acetylmuramyl-tripeptide synthetase (Lactococcus lactis subsp. cremoris (strain MG1363)).